A 175-amino-acid polypeptide reads, in one-letter code: NADH-ubiquinone oxidoreductase chain 6 (175 aa).

The next 5 membrane-spanning stretches (helical) occupy residues Met1–Ala21, Ser25–Leu45, Phe47–Val67, Ala88–Leu108, and Tyr149–Met169.

The protein belongs to the complex I subunit 6 family. As to quaternary structure, core subunit of respiratory chain NADH dehydrogenase (Complex I) which is composed of 45 different subunits.

It is found in the mitochondrion inner membrane. The enzyme catalyses a ubiquinone + NADH + 5 H(+)(in) = a ubiquinol + NAD(+) + 4 H(+)(out). Functionally, core subunit of the mitochondrial membrane respiratory chain NADH dehydrogenase (Complex I) which catalyzes electron transfer from NADH through the respiratory chain, using ubiquinone as an electron acceptor. Essential for the catalytic activity and assembly of complex I. This chain is NADH-ubiquinone oxidoreductase chain 6 (MT-ND6), found in Canis lupus familiaris (Dog).